Consider the following 451-residue polypeptide: Tubulin beta chain (451 aa).

GTP is bound by residues glutamine 11, glutamate 69, serine 138, glycine 142, threonine 143, glycine 144, asparagine 204, and asparagine 226. Glutamate 69 lines the Mg(2+) pocket. A disordered region spans residues 426–451 (QDATAEEEGEFDENEGAEGEEQPADY). The segment covering 429–451 (TAEEEGEFDENEGAEGEEQPADY) has biased composition (acidic residues).

It belongs to the tubulin family. In terms of assembly, dimer of alpha and beta chains. A typical microtubule is a hollow water-filled tube with an outer diameter of 25 nm and an inner diameter of 15 nM. Alpha-beta heterodimers associate head-to-tail to form protofilaments running lengthwise along the microtubule wall with the beta-tubulin subunit facing the microtubule plus end conferring a structural polarity. Microtubules usually have 13 protofilaments but different protofilament numbers can be found in some organisms and specialized cells. It depends on Mg(2+) as a cofactor.

Its subcellular location is the cytoplasm. The protein resides in the cytoskeleton. Tubulin is the major constituent of microtubules, a cylinder consisting of laterally associated linear protofilaments composed of alpha- and beta-tubulin heterodimers. Microtubules grow by the addition of GTP-tubulin dimers to the microtubule end, where a stabilizing cap forms. Below the cap, tubulin dimers are in GDP-bound state, owing to GTPase activity of alpha-tubulin. This is Tubulin beta chain from Naegleria pringsheimi (Amoeba).